The chain runs to 606 residues: Calmegin (606 aa).

The first 19 residues, 1 to 19 (MRFQGFWLCLGLLFISVNA), serve as a signal peptide directing secretion. The Lumenal portion of the chain corresponds to 20–466 (EFMDDSVEME…QLMSATEQRP (447 aa)). K124 carries the post-translational modification N6-acetyllysine. Cysteines 147 and 181 form a disulfide. A disordered region spans residues 255–308 (PPINPPKEIEDPTDEKPDDWDERAKIPDASAVKPEDWDESEPPQIVDSSAVKPD). 8 tandem repeats follow at residues 263–276 (IEDP…DWDE), 280–293 (IPDA…DWDE), 299–312 (IVDS…GWLD), 318–331 (IPDP…DWNE), 335–348 (GEWE…PACR), 352–365 (GEWS…PKYK), 366–379 (GIWR…PNYQ), and 380–393 (GIWS…PDYF). The span at 265-275 (DPTDEKPDDWD) shows a compositional bias: acidic residues. The interaction with PPIB stretch occupies residues 313–346 (NEPEFIPDPNAEKPFDWNEDMDGEWEAPHISNPA). A disulfide bond links C347 and C351. A helical transmembrane segment spans residues 467-487 (WLWFIYLLTAALPIALIGSFC). Residues 488–606 (WPRKVKKKYE…SVRKRRVRKE (119 aa)) are Cytoplasmic-facing. The segment covering 518-544 (EVKEEKAALEKPVDLEEEKKQSDGEIV) has biased composition (basic and acidic residues). The interval 518-606 (EVKEEKAALE…SVRKRRVRKE (89 aa)) is disordered. Residues 545–567 (EKEEEGEPEEKSEEEIEIIEGQE) are compositionally biased toward acidic residues. A phosphoserine mark is found at S556, S572, S575, S577, S587, S590, and S597. A compositionally biased stretch (basic and acidic residues) spans 568–579 (EGNKSNKSGSED). Over residues 597–606 (SVRKRRVRKE) the composition is skewed to basic residues.

The protein belongs to the calreticulin family. Interacts with PPIB and PDILT. Interacts with ADAM2.

Its subcellular location is the endoplasmic reticulum membrane. In terms of biological role, functions during spermatogenesis as a chaperone for a range of client proteins that are important for sperm adhesion onto the egg zona pellucida and for subsequent penetration of the zona pellucida. Required for normal sperm migration from the uterus into the oviduct. Required for normal male fertility. Binds calcium ions. The sequence is that of Calmegin (CLGN) from Bos taurus (Bovine).